A 358-amino-acid chain; its full sequence is Probable butyrate kinase (358 aa).

The protein belongs to the acetokinase family.

The protein localises to the cytoplasm. It catalyses the reaction butanoate + ATP = butanoyl phosphate + ADP. The sequence is that of Probable butyrate kinase from Oceanobacillus iheyensis (strain DSM 14371 / CIP 107618 / JCM 11309 / KCTC 3954 / HTE831).